The chain runs to 417 residues: NADH-quinone oxidoreductase subunit D (417 aa).

The protein belongs to the complex I 49 kDa subunit family. In terms of assembly, NDH-1 is composed of 14 different subunits. Subunits NuoB, C, D, E, F, and G constitute the peripheral sector of the complex.

The protein resides in the cell inner membrane. It carries out the reaction a quinone + NADH + 5 H(+)(in) = a quinol + NAD(+) + 4 H(+)(out). NDH-1 shuttles electrons from NADH, via FMN and iron-sulfur (Fe-S) centers, to quinones in the respiratory chain. The immediate electron acceptor for the enzyme in this species is believed to be ubiquinone. Couples the redox reaction to proton translocation (for every two electrons transferred, four hydrogen ions are translocated across the cytoplasmic membrane), and thus conserves the redox energy in a proton gradient. The chain is NADH-quinone oxidoreductase subunit D from Burkholderia multivorans (strain ATCC 17616 / 249).